The primary structure comprises 324 residues: MSVEDGGLPGLGGPGQARWTLMLLLSTATYGAHAPLLALCHVDGRVPFRPSSAVLLTELTKLLLCALSLLVGWQAWPPRTPPWRQAAPFALSALLYGANNNLVIHLQHYMDPSTYQVLSNLKIGSTALFYCLCLRRRLSARQGLALLLLMAAGACYAAGGLRDPGSPLPESPSTAASGPVPLHVTAPGLLLLLLYCLISGLSSVYTELLLKRQRLPLALQNLFLYTFGVLLNLGLHAGGGPGPGLLEGFSGWAALVVLSQALNGLLMSAVMKHGSSITRLFVVSCSLVVNAVLSAALLRLQLTAAFFLAALLIGLAVHLYYGSR.

At 1 to 18 (MSVEDGGLPGLGGPGQAR) the chain is on the cytoplasmic side. The helical transmembrane segment at 19–39 (WTLMLLLSTATYGAHAPLLAL) threads the bilayer. The Lumenal segment spans residues 40–52 (CHVDGRVPFRPSS). The chain crosses the membrane as a helical span at residues 53–73 (AVLLTELTKLLLCALSLLVGW). The Cytoplasmic portion of the chain corresponds to 74-85 (QAWPPRTPPWRQ). Residues 86–106 (AAPFALSALLYGANNNLVIHL) form a helical membrane-spanning segment. Residues 107 to 140 (QHYMDPSTYQVLSNLKIGSTALFYCLCLRRRLSA) are Lumenal-facing. A helical transmembrane segment spans residues 141-161 (RQGLALLLLMAAGACYAAGGL). The Cytoplasmic portion of the chain corresponds to 162–177 (RDPGSPLPESPSTAAS). A helical membrane pass occupies residues 178-198 (GPVPLHVTAPGLLLLLLYCLI). The Lumenal segment spans residues 199-214 (SGLSSVYTELLLKRQR). Residues 215-235 (LPLALQNLFLYTFGVLLNLGL) traverse the membrane as a helical segment. Over 236-248 (HAGGGPGPGLLEG) the chain is Cytoplasmic. A helical membrane pass occupies residues 249 to 271 (FSGWAALVVLSQALNGLLMSAVM). Residues 272-279 (KHGSSITR) are Lumenal-facing. The chain crosses the membrane as a helical span at residues 280–300 (LFVVSCSLVVNAVLSAALLRL). Residues 301–324 (QLTAAFFLAALLIGLAVHLYYGSR) lie on the Cytoplasmic side of the membrane.

The protein belongs to the nucleotide-sugar transporter family. SLC35A subfamily. In terms of assembly, found in a complex with SLC35A2 and SLC35A3.

Its subcellular location is the golgi apparatus membrane. It carries out the reaction CDP-L-ribitol(in) + CDP(out) = CDP-L-ribitol(out) + CDP(in). In terms of biological role, mediates the transport of CDP-ribitol. Does not exhibit CMP-sialic acid, UDP-galactose and UDP-N-acetylglucosamine transport activity. This chain is Probable UDP-sugar transporter protein SLC35A4, found in Sus scrofa (Pig).